We begin with the raw amino-acid sequence, 372 residues long: NAD(P)H-quinone oxidoreductase subunit 1 (372 aa).

A run of 8 helical transmembrane segments spans residues 27-47 (LLWI…GVLV), 97-117 (VLFT…WLIV), 128-148 (VGIG…GLLM), 166-186 (AAQS…IVMM), 204-224 (FLSW…ICAL), 266-286 (VLSA…PISI), 308-328 (SLGI…AILL), and 347-367 (FLLP…LAFP).

This sequence belongs to the complex I subunit 1 family. In terms of assembly, NDH-1 is composed of at least 11 different subunits.

The protein resides in the cellular thylakoid membrane. It catalyses the reaction a plastoquinone + NADH + (n+1) H(+)(in) = a plastoquinol + NAD(+) + n H(+)(out). The catalysed reaction is a plastoquinone + NADPH + (n+1) H(+)(in) = a plastoquinol + NADP(+) + n H(+)(out). NDH-1 shuttles electrons from an unknown electron donor, via FMN and iron-sulfur (Fe-S) centers, to quinones in the respiratory and/or the photosynthetic chain. The immediate electron acceptor for the enzyme in this species is believed to be plastoquinone. Couples the redox reaction to proton translocation, and thus conserves the redox energy in a proton gradient. The polypeptide is NAD(P)H-quinone oxidoreductase subunit 1 (Prochlorococcus marinus (strain NATL2A)).